The sequence spans 382 residues: Intermediate transcription factor 3 large subunit (382 aa).

This sequence belongs to the orthopoxvirus OPG150 family. Heterodimerizes with protein A8 to form the virus intermediate transcription factor (VITF)-3.

Acts with RNA polymerase to initiate transcription from intermediate gene promoters. The protein is Intermediate transcription factor 3 large subunit (OPG150) of Bos taurus (Bovine).